The primary structure comprises 329 residues: DNA-directed RNA polymerase subunit alpha (329 aa).

The interval 1 to 235 (MQGSVTEFLK…EQLEAFVDLR (235 aa)) is alpha N-terminal domain (alpha-NTD). An alpha C-terminal domain (alpha-CTD) region spans residues 249-329 (FDPILLRPVD…NWPPASIADE (81 aa)).

Belongs to the RNA polymerase alpha chain family. In terms of assembly, homodimer. The RNAP catalytic core consists of 2 alpha, 1 beta, 1 beta' and 1 omega subunit. When a sigma factor is associated with the core the holoenzyme is formed, which can initiate transcription.

It carries out the reaction RNA(n) + a ribonucleoside 5'-triphosphate = RNA(n+1) + diphosphate. Its function is as follows. DNA-dependent RNA polymerase catalyzes the transcription of DNA into RNA using the four ribonucleoside triphosphates as substrates. The protein is DNA-directed RNA polymerase subunit alpha of Photorhabdus laumondii subsp. laumondii (strain DSM 15139 / CIP 105565 / TT01) (Photorhabdus luminescens subsp. laumondii).